A 986-amino-acid polypeptide reads, in one-letter code: Mediator of RNA polymerase II transcription subunit 24 (986 aa).

Short sequence motifs (LXXLL motif) lie at residues 128–132, 341–345, 445–449, 554–558, 785–789, and 855–859; these read LNWLL, LTPLL, LDLLL, LVALL, LPNLL, and LMRLL.

Belongs to the Mediator complex subunit 24 family. As to quaternary structure, component of the Mediator complex.

The protein localises to the nucleus. Functionally, component of the Mediator complex, a coactivator involved in the regulated transcription of nearly all RNA polymerase II-dependent genes. Mediator functions as a bridge to convey information from gene-specific regulatory proteins to the basal RNA polymerase II transcription machinery. Mediator is recruited to promoters by direct interactions with regulatory proteins and serves as a scaffold for the assembly of a functional preinitiation complex with RNA polymerase II and the general transcription factors. The protein is Mediator of RNA polymerase II transcription subunit 24 (MED24) of Gallus gallus (Chicken).